Here is an 87-residue protein sequence, read N- to C-terminus: Small ribosomal subunit protein uS17 (87 aa).

It belongs to the universal ribosomal protein uS17 family. Part of the 30S ribosomal subunit.

Functionally, one of the primary rRNA binding proteins, it binds specifically to the 5'-end of 16S ribosomal RNA. In Hydrogenovibrio crunogenus (strain DSM 25203 / XCL-2) (Thiomicrospira crunogena), this protein is Small ribosomal subunit protein uS17.